The following is a 653-amino-acid chain: Chaperone protein DnaK (653 aa).

Residue threonine 200 is modified to Phosphothreonine; by autocatalysis. Residues 612–653 (QGAAGAAGAAGGAGAAAGAEAAGASQQADDVVDAEFKEVKKD) are disordered. A compositionally biased stretch (low complexity) spans 627 to 639 (AAGAEAAGASQQA).

The protein belongs to the heat shock protein 70 family.

Its function is as follows. Acts as a chaperone. This Paraburkholderia phymatum (strain DSM 17167 / CIP 108236 / LMG 21445 / STM815) (Burkholderia phymatum) protein is Chaperone protein DnaK.